A 362-amino-acid polypeptide reads, in one-letter code: Cobalt-precorrin-5B C(1)-methyltransferase (362 aa).

It belongs to the CbiD family.

It catalyses the reaction Co-precorrin-5B + S-adenosyl-L-methionine = Co-precorrin-6A + S-adenosyl-L-homocysteine. It participates in cofactor biosynthesis; adenosylcobalamin biosynthesis; cob(II)yrinate a,c-diamide from sirohydrochlorin (anaerobic route): step 6/10. Catalyzes the methylation of C-1 in cobalt-precorrin-5B to form cobalt-precorrin-6A. This is Cobalt-precorrin-5B C(1)-methyltransferase from Geobacter sulfurreducens (strain ATCC 51573 / DSM 12127 / PCA).